A 456-amino-acid polypeptide reads, in one-letter code: Chromosomal replication initiator protein DnaA (456 aa).

Residues 1–83 (MTASLWQQCL…LRFDIGNRPH (83 aa)) form a domain I, interacts with DnaA modulators region. The domain II stretch occupies residues 83 to 119 (HPVAVARAPARGADPVNNSQKSWESKAEAKPEPNHKS). Residues 92–122 (ARGADPVNNSQKSWESKAEAKPEPNHKSNTN) are disordered. Basic and acidic residues predominate over residues 105–117 (WESKAEAKPEPNH). The domain III, AAA+ region stretch occupies residues 120 to 336 (NTNVNYTFEN…GALNRVIANA (217 aa)). ATP-binding residues include glycine 164, glycine 166, lysine 167, and threonine 168. The interval 337-456 (NFTGRAINID…YSNLIRTLSS (120 aa)) is domain IV, binds dsDNA.

Belongs to the DnaA family. Oligomerizes as a right-handed, spiral filament on DNA at oriC.

It localises to the cytoplasm. Functionally, plays an essential role in the initiation and regulation of chromosomal replication. ATP-DnaA binds to the origin of replication (oriC) to initiate formation of the DNA replication initiation complex once per cell cycle. Binds the DnaA box (a 9 base pair repeat at the origin) and separates the double-stranded (ds)DNA. Forms a right-handed helical filament on oriC DNA; dsDNA binds to the exterior of the filament while single-stranded (ss)DNA is stabiized in the filament's interior. The ATP-DnaA-oriC complex binds and stabilizes one strand of the AT-rich DNA unwinding element (DUE), permitting loading of DNA polymerase. After initiation quickly degrades to an ADP-DnaA complex that is not apt for DNA replication. Binds acidic phospholipids. The protein is Chromosomal replication initiator protein DnaA of Aeromonas hydrophila subsp. hydrophila (strain ATCC 7966 / DSM 30187 / BCRC 13018 / CCUG 14551 / JCM 1027 / KCTC 2358 / NCIMB 9240 / NCTC 8049).